The sequence spans 569 residues: 4-hydroxy-7-methoxy-3-oxo-3,4-dihydro-2H-1,4-benzoxazin-2-yl glucoside beta-D-glucosidase 1a, chloroplastic (569 aa).

The transit peptide at 1 to 50 (MALLAAATLNPTTHLSLRSRAGRNSENLWLRSAASSQKSKGRFCNLTIRA) directs the protein to the chloroplast. Residues Gln-92, His-194, and 239-240 (NE) contribute to the a beta-D-glucoside site. Glu-240 acts as the Proton donor in catalysis. Cysteines 259 and 265 form a disulfide. A beta-D-glucoside is bound by residues Tyr-383, Glu-456, Trp-504, 511–512 (EW), and Phe-520. Glu-456 functions as the Nucleophile in the catalytic mechanism.

Belongs to the glycosyl hydrolase 1 family. In terms of assembly, homo- and heterohexamers. In terms of tissue distribution, expressed in young seedlings early after germination.

The protein resides in the plastid. It localises to the chloroplast. It catalyses the reaction Hydrolysis of terminal, non-reducing beta-D-glucosyl residues with release of beta-D-glucose.. The catalysed reaction is DIMBOA beta-D-glucoside + H2O = DIMBOA + D-glucose. It carries out the reaction DIBOA beta-D-glucoside + H2O = DIBOA + D-glucose. In terms of biological role, acts in defense of young plant parts against pests via the production of hydroxamic acids from hydroxamic acid glucosides. Enzymatic activity is highly correlated with plant growth. The preferred substrate is DIMBOA-beta-D-glucoside. The sequence is that of 4-hydroxy-7-methoxy-3-oxo-3,4-dihydro-2H-1,4-benzoxazin-2-yl glucoside beta-D-glucosidase 1a, chloroplastic (GLU1A) from Triticum aestivum (Wheat).